The primary structure comprises 216 residues: Cytochrome c biogenesis ATP-binding export protein CcmA (216 aa).

An ABC transporter domain is found at 11-216 (VSASKLTCIR…RKIRLDYRFV (206 aa)). Residue 43–50 (GPNGAGKT) coordinates ATP.

The protein belongs to the ABC transporter superfamily. CcmA exporter (TC 3.A.1.107) family. In terms of assembly, the complex is composed of two ATP-binding proteins (CcmA) and two transmembrane proteins (CcmB).

It is found in the cell inner membrane. It carries out the reaction heme b(in) + ATP + H2O = heme b(out) + ADP + phosphate + H(+). In terms of biological role, part of the ABC transporter complex CcmAB involved in the biogenesis of c-type cytochromes; once thought to export heme, this seems not to be the case, but its exact role is uncertain. Responsible for energy coupling to the transport system. The polypeptide is Cytochrome c biogenesis ATP-binding export protein CcmA (Shewanella sp. (strain MR-4)).